Consider the following 182-residue polypeptide: UPF0690 protein C1orf52 homolog (182 aa).

The interval 1–61 (MAAEEKDPLS…AEKRLPGPDE (61 aa)) is disordered. The segment covering 23–32 (SDEEDNSEPE) has biased composition (acidic residues). The span at 51-61 (KAEKRLPGPDE) shows a compositional bias: basic and acidic residues. T67 carries the post-translational modification Phosphothreonine. A Phosphotyrosine modification is found at Y132. The interval 132–182 (YEDNGDDAPQNAKKARLLPEGEETVESDDEKDEHTSKKRKIELGEPTKKKK) is disordered. The segment covering 151–162 (EGEETVESDDEK) has biased composition (acidic residues). S158 bears the Phosphoserine mark. Over residues 172 to 182 (IELGEPTKKKK) the composition is skewed to basic and acidic residues.

Belongs to the UPF0690 family.

The sequence is that of UPF0690 protein C1orf52 homolog from Bos taurus (Bovine).